We begin with the raw amino-acid sequence, 130 residues long: MRHRKSGRQLNRNSSHRQAMFRNMACSIVRHEVIKTTVAKAKELRRVVEPLITLAKSDSVANRRLAFARTRDAEVVGKLFTELGPRFQDRPGGYTRILKCGLRTGDKAPMAYIELVGRPEAAEAVEDTAE.

The protein belongs to the bacterial ribosomal protein bL17 family. Part of the 50S ribosomal subunit. Contacts protein L32.

In Shewanella halifaxensis (strain HAW-EB4), this protein is Large ribosomal subunit protein bL17.